Consider the following 417-residue polypeptide: Gamma-glutamyl phosphate reductase (417 aa).

Belongs to the gamma-glutamyl phosphate reductase family.

Its subcellular location is the cytoplasm. It catalyses the reaction L-glutamate 5-semialdehyde + phosphate + NADP(+) = L-glutamyl 5-phosphate + NADPH + H(+). The protein operates within amino-acid biosynthesis; L-proline biosynthesis; L-glutamate 5-semialdehyde from L-glutamate: step 2/2. Functionally, catalyzes the NADPH-dependent reduction of L-glutamate 5-phosphate into L-glutamate 5-semialdehyde and phosphate. The product spontaneously undergoes cyclization to form 1-pyrroline-5-carboxylate. This chain is Gamma-glutamyl phosphate reductase, found in Desulfitobacterium hafniense (strain Y51).